A 1722-amino-acid polypeptide reads, in one-letter code: Lymphocyte antigen 75 (1722 aa).

Residues 1–27 form the signal peptide; it reads MGTRRVTPGCAAGLLVLLLRCFGLAEP. Residues 28-1666 are Extracellular-facing; that stretch reads SEFSGDDSFT…VVCKVPLSPD (1639 aa). Positions 32-182 constitute a Ricin B-type lectin domain; that stretch reads GDDSFTIVNE…FLVGETWHHD (151 aa). N-linked (GlcNAc...) asparagine glycosylation occurs at Asn135. In terms of domain architecture, Fibronectin type-II spans 164 to 211; that stretch reads SYGRPCEFPFLVGETWHHDCIRDENHSGPWCATTLNYEYDQKWGICLK. 4 disulfide bridges follow: Cys169–Cys194, Cys183–Cys209, Cys247–Cys340, and Cys317–Cys332. Residues 225–341 form the C-type lectin 1 domain; the sequence is QIGSCYQFNN…CEAQQPYVCK (117 aa). Residues Asn345 and Asn377 are each glycosylated (N-linked (GlcNAc...) asparagine). C-type lectin domains lie at 368-486, 493-625, and 652-791; these read QNGF…YVCK, NDTR…ICKK, and SNLS…WVCQ. 2 disulfide bridges follow: Cys389/Cys485 and Cys462/Cys477. A glycan (N-linked (GlcNAc...) asparagine) is linked at Asn529. Intrachain disulfides connect Cys597–Cys614, Cys678–Cys790, and Cys752–Cys782. Asn843 and Asn865 each carry an N-linked (GlcNAc...) asparagine glycan. Phosphotyrosine is present on Tyr933. Residues Asn934 and Asn1076 are each glycosylated (N-linked (GlcNAc...) asparagine). 2 C-type lectin domains span residues 958 to 1091 and 1110 to 1222; these read FQNK…LCQK and YLNN…ICYY. 2 cysteine pairs are disulfide-bonded: Cys1060–Cys1080 and Cys1197–Cys1211. 3 N-linked (GlcNAc...) asparagine glycosylation sites follow: Asn1225, Asn1320, and Asn1392. In terms of domain architecture, C-type lectin 7 spans 1251–1374; that stretch reads FQNSCYNFMI…VIDETLHFYQ (124 aa). C-type lectin domains follow at residues 1401 to 1513 and 1542 to 1661; these read YEDG…ICYK and YGDH…VCKV. Cys1488 and Cys1502 are disulfide-bonded. N-linked (GlcNAc...) asparagine glycans are attached at residues Asn1593 and Asn1626. Cys1635 and Cys1650 form a disulfide bridge. The helical transmembrane segment at 1667-1691 threads the bilayer; the sequence is YRGIAVLFAVLSVLALISGLIWFLV. The Cytoplasmic segment spans residues 1692–1722; the sequence is QRNHFRWTGLSSVRYEHGANEDEVMLPSFHD. Ser1703 and Ser1719 each carry phosphoserine.

In terms of tissue distribution, expressed in the thymus and cultured bone marrow cells.

The protein localises to the membrane. In terms of biological role, acts as an endocytic receptor to direct captured antigens from the extracellular space to a specialized antigen-processing compartment. Causes reduced proliferation of B lymphocytes. This is Lymphocyte antigen 75 (LY75) from Mesocricetus auratus (Golden hamster).